A 100-amino-acid polypeptide reads, in one-letter code: MRLSPHEQERLLLSYAAELARRRRQRGLVLNHPEAVALITDHLLEGARDGRSVAELMVSGREVLTRADVMEGVPEMLHDVQVEATFPDGTKLVTVHDPIA.

It belongs to the urease gamma subunit family. As to quaternary structure, heterotrimer of UreA (gamma), UreB (beta) and UreC (alpha) subunits. Three heterotrimers associate to form the active enzyme.

It localises to the cytoplasm. The enzyme catalyses urea + 2 H2O + H(+) = hydrogencarbonate + 2 NH4(+). Its pathway is nitrogen metabolism; urea degradation; CO(2) and NH(3) from urea (urease route): step 1/1. This chain is Urease subunit gamma, found in Rhodococcus opacus (strain B4).